The primary structure comprises 338 residues: Holliday junction branch migration complex subunit RuvB (338 aa).

Residues 4–187 (ADKDRLVSGD…FGISEHMAYY (184 aa)) are large ATPase domain (RuvB-L). ATP contacts are provided by residues L26, R27, G68, K71, T72, T73, 134 to 136 (EDF), R177, Y187, and R224. Residue T72 participates in Mg(2+) binding. Positions 188–258 (SADDLSEIVK…MVDHALDQLQ (71 aa)) are small ATPAse domain (RuvB-S). The interval 261-338 (QQGLDQIDRK…AHMGMSAEQH (78 aa)) is head domain (RuvB-H). Residues R316 and R321 each coordinate DNA.

This sequence belongs to the RuvB family. In terms of assembly, homohexamer. Forms an RuvA(8)-RuvB(12)-Holliday junction (HJ) complex. HJ DNA is sandwiched between 2 RuvA tetramers; dsDNA enters through RuvA and exits via RuvB. An RuvB hexamer assembles on each DNA strand where it exits the tetramer. Each RuvB hexamer is contacted by two RuvA subunits (via domain III) on 2 adjacent RuvB subunits; this complex drives branch migration. In the full resolvosome a probable DNA-RuvA(4)-RuvB(12)-RuvC(2) complex forms which resolves the HJ.

It localises to the cytoplasm. It catalyses the reaction ATP + H2O = ADP + phosphate + H(+). Its function is as follows. The RuvA-RuvB-RuvC complex processes Holliday junction (HJ) DNA during genetic recombination and DNA repair, while the RuvA-RuvB complex plays an important role in the rescue of blocked DNA replication forks via replication fork reversal (RFR). RuvA specifically binds to HJ cruciform DNA, conferring on it an open structure. The RuvB hexamer acts as an ATP-dependent pump, pulling dsDNA into and through the RuvAB complex. RuvB forms 2 homohexamers on either side of HJ DNA bound by 1 or 2 RuvA tetramers; 4 subunits per hexamer contact DNA at a time. Coordinated motions by a converter formed by DNA-disengaged RuvB subunits stimulates ATP hydrolysis and nucleotide exchange. Immobilization of the converter enables RuvB to convert the ATP-contained energy into a lever motion, pulling 2 nucleotides of DNA out of the RuvA tetramer per ATP hydrolyzed, thus driving DNA branch migration. The RuvB motors rotate together with the DNA substrate, which together with the progressing nucleotide cycle form the mechanistic basis for DNA recombination by continuous HJ branch migration. Branch migration allows RuvC to scan DNA until it finds its consensus sequence, where it cleaves and resolves cruciform DNA. This chain is Holliday junction branch migration complex subunit RuvB, found in Lacticaseibacillus paracasei (strain ATCC 334 / BCRC 17002 / CCUG 31169 / CIP 107868 / KCTC 3260 / NRRL B-441) (Lactobacillus paracasei).